A 303-amino-acid polypeptide reads, in one-letter code: Protein REVEILLE 5 (303 aa).

Residues 54–108 form the HTH myb-type domain; it reads TIKKSRENWTDQEHDKFLEALHLFDRDWKKIEAFVGSKTVVQIRSHAQKYFLKVQ. Residues 81 to 104 constitute a DNA-binding region (H-T-H motif); that stretch reads WKKIEAFVGSKTVVQIRSHAQKYF. The tract at residues 109 to 130 is disordered; the sequence is KSGANEHLPPPRPKRKASHPYP.

Its subcellular location is the nucleus. In terms of biological role, probable transcription factor. The chain is Protein REVEILLE 5 (RVE5) from Arabidopsis thaliana (Mouse-ear cress).